A 129-amino-acid chain; its full sequence is Chromatin accessibility complex protein 1 (129 aa).

An N-acetylalanine modification is found at A2. N6-acetyllysine is present on K102. Residues 104-120 are a coiled coil; that stretch reads LKMLKEKREEEEDNEDD. The tract at residues 109 to 129 is disordered; sequence EKREEEEDNEDDGSDLGEALA. A compositionally biased stretch (acidic residues) spans 112 to 123; sequence EEEEDNEDDGSD. A Phosphoserine modification is found at S122.

In terms of assembly, heterodimer with POLE3; binds to DNA. Component of the CHRAC ISWI chromatin remodeling complex at least composed of SMARCA5/SNF2H, BAZ1A/ACF1, CHRAC1 and POLE3; the complex preferentially binds DNA through the CHRAC1-POLE3 heterodimer and possesses ATP-dependent nucleosome-remodeling activity. Within the complex, the heterodimer with POLE3 interacts with SMARCA5/SNF2H; the interaction is direct and enhances nucleosome sliding activity by the SMARCA5/SNF2H and BAZ1A/ACF1 interaction. Within the complex, the heterodimer with POLE3 interacts with BAZ1A/ACF1; the interactions are direct. In terms of tissue distribution, ubiquitously expressed.

The protein resides in the nucleus. Functionally, forms a complex with DNA polymerase epsilon subunit POLE3 and binds naked DNA, which is then incorporated into chromatin, aided by the nucleosome remodeling activity of ISWI/SNF2H and ACF1. Does not enhance nucleosome sliding activity of the ACF-5 ISWI chromatin remodeling complex. The polypeptide is Chromatin accessibility complex protein 1 (Chrac1) (Mus musculus (Mouse)).